The chain runs to 418 residues: Lactosylceramide alpha-2,3-sialyltransferase (418 aa).

The disordered stretch occupies residues 1–25 (MRTKAAGCAERRPLQPRTEAAAAPA). Over 1 to 61 (MRTKAAGCAE…RAQSKMRRPS (61 aa)) the chain is Cytoplasmic. Residues 62-82 (LLLKDILKCTLLVFGVWILYI) form a helical; Signal-anchor for type II membrane protein membrane-spanning segment. The Lumenal portion of the chain corresponds to 83–418 (LKLNYTTEEC…DLSGGIDREF (336 aa)). Asparagine 86, asparagine 236, and asparagine 390 each carry an N-linked (GlcNAc...) asparagine glycan. A disulfide bond links cysteine 195 and cysteine 353.

The protein belongs to the glycosyltransferase 29 family. In terms of processing, N-glycosylated. As to expression, ubiquitous. High expression in brain, skeletal muscle, placenta, and testis. mRNA widely distributed in human brain, but slightly elevated expression was observed in the cerebral cortex, temporal lobe, and putamen.

The protein resides in the golgi apparatus membrane. It catalyses the reaction a beta-D-Gal-(1-&gt;4)-beta-D-Glc-(1&lt;-&gt;1)-Cer(d18:1(4E)) + CMP-N-acetyl-beta-neuraminate = a ganglioside GM3 (d18:1(4E)) + CMP + H(+). The catalysed reaction is ganglioside GA2 (d18:1(4E)/18:0) + CMP-N-acetyl-beta-neuraminate = ganglioside GM2 (d18:1(4E)/18:0) + CMP + H(+). It carries out the reaction a beta-D-Gal-(1&lt;-&gt;1')-ceramide + CMP-N-acetyl-beta-neuraminate = N-acetyl-alpha-neuraminosyl-(2-&gt;3)-beta-D-galactosyl-(1&lt;-&gt;1')-ceramide + CMP + H(+). The enzyme catalyses a beta-D-galactosyl-(1&lt;-&gt;1')-N-acylsphing-4-enine + CMP-N-acetyl-beta-neuraminate = a ganglioside GM4 (d18:1(4E)) + CMP + H(+). It catalyses the reaction ganglioside GA1 (d18:1(4E)/18:0) + CMP-N-acetyl-beta-neuraminate = ganglioside GM1 (d18:1(4E)/18:0) + CMP + H(+). It functions in the pathway glycolipid biosynthesis. Its function is as follows. Transfers the sialyl group (N-acetyl-alpha-neuraminyl or NeuAc) from CMP-NeuAc to the non-reducing terminal galactose (Gal) of glycosphingolipids forming gangliosides (important molecules involved in the regulation of multiple cellular processes, including cell proliferation and differentiation, apoptosis, embryogenesis, development, and oncogenesis). Mainly involved in the biosynthesis of ganglioside GM3 but can also use different glycolipids as substrate acceptors such as D-galactosylceramide (GalCer), asialo-GM2 (GA2) and asialo-GM1 (GA1), although less preferentially than beta-D-Gal-(1-&gt;4)-beta-D-Glc-(1&lt;-&gt;1)-Cer (LacCer). The chain is Lactosylceramide alpha-2,3-sialyltransferase (ST3GAL5) from Homo sapiens (Human).